Here is a 391-residue protein sequence, read N- to C-terminus: uncharacterized protein (391 aa).

Positions 118–149 (SINSLPPTTTTTTTTTTTTTIPNNNNNITLSP) are enriched in low complexity. Disordered stretches follow at residues 118-162 (SINS…HQHP), 184-258 (QTNV…TPRN), 272-327 (NNNL…NNLN), and 337-356 (LNLN…NNNN). A compositionally biased stretch (basic residues) spans 150 to 162 (QHHHGQQQHHQHP). Positions 186–211 (NVNNNNNNNNNNNNNNNSNNNNNNNN) are enriched in low complexity. Over residues 212–223 (DFSTPNSFSVPT) the composition is skewed to polar residues. Low complexity predominate over residues 244-256 (NTPNNSTSNPTTP).

This is an uncharacterized protein from Dictyostelium discoideum (Social amoeba).